The primary structure comprises 416 residues: Gamma-glutamyl phosphate reductase (416 aa).

Belongs to the gamma-glutamyl phosphate reductase family.

It localises to the cytoplasm. The catalysed reaction is L-glutamate 5-semialdehyde + phosphate + NADP(+) = L-glutamyl 5-phosphate + NADPH + H(+). It participates in amino-acid biosynthesis; L-proline biosynthesis; L-glutamate 5-semialdehyde from L-glutamate: step 2/2. Catalyzes the NADPH-dependent reduction of L-glutamate 5-phosphate into L-glutamate 5-semialdehyde and phosphate. The product spontaneously undergoes cyclization to form 1-pyrroline-5-carboxylate. This chain is Gamma-glutamyl phosphate reductase, found in Salmonella agona (strain SL483).